The following is a 575-amino-acid chain: Adenine deaminase (575 aa).

This sequence belongs to the metallo-dependent hydrolases superfamily. Adenine deaminase family. Requires Mn(2+) as cofactor.

It carries out the reaction adenine + H2O + H(+) = hypoxanthine + NH4(+). This Nitratidesulfovibrio vulgaris (strain DP4) (Desulfovibrio vulgaris) protein is Adenine deaminase.